The sequence spans 521 residues: AAA ATPase forming ring-shaped complexes (521 aa).

Positions 4–44 (TEDLAALNDRLMAKNHALAEALSRAGKELTKAKSQLAQLAQ) form a coiled coil. 235 to 240 (GNGKTM) provides a ligand contact to ATP.

Belongs to the AAA ATPase family. As to quaternary structure, homohexamer. Assembles into a hexameric ring structure.

In Bifidobacterium longum (strain NCC 2705), this protein is AAA ATPase forming ring-shaped complexes.